Here is a 289-residue protein sequence, read N- to C-terminus: Shikimate dehydrogenase (NADP(+)) (289 aa).

Shikimate contacts are provided by residues 19-21 and T66; that span reads SLS. Residue K70 is the Proton acceptor of the active site. Positions 91 and 106 each coordinate shikimate. Residues 131–135 and L229 each bind NADP(+); that span reads GNGGA. Residue Y231 coordinates shikimate. G252 contacts NADP(+).

This sequence belongs to the shikimate dehydrogenase family. In terms of assembly, homodimer.

It carries out the reaction shikimate + NADP(+) = 3-dehydroshikimate + NADPH + H(+). The protein operates within metabolic intermediate biosynthesis; chorismate biosynthesis; chorismate from D-erythrose 4-phosphate and phosphoenolpyruvate: step 4/7. Its function is as follows. Involved in the biosynthesis of the chorismate, which leads to the biosynthesis of aromatic amino acids. Catalyzes the reversible NADPH linked reduction of 3-dehydroshikimate (DHSA) to yield shikimate (SA). The polypeptide is Shikimate dehydrogenase (NADP(+)) (Nostoc sp. (strain PCC 7120 / SAG 25.82 / UTEX 2576)).